Reading from the N-terminus, the 968-residue chain is Hexon protein (968 aa).

Residue Ala-2 is modified to N-acetylalanine; by host. A disordered region spans residues 125-188 (APKGAPNSCE…APLSGETITK (64 aa)). Residues 147–162 (EDEEEEDEDEEEEEEE) are compositionally biased toward acidic residues. Phosphoserine; by host occurs at positions 182 and 283. Tyr-956 carries the post-translational modification Phosphotyrosine; by host.

It belongs to the adenoviridae hexon protein family. Homotrimer. Interacts with the capsid vertex protein; this interaction binds the peripentonal hexons to the neighboring penton base. Interacts with the hexon-linking protein; this interaction tethers the hexons surrounding the penton to those situated in the central plate of the facet. Interacts with the hexon-interlacing protein; this interaction lashes the hexons together. Interacts with pre-protein VI; this interaction probably allows nuclear import of hexon trimers and possibly pre-capsid assembly. Interacts with host dyneins DYNC1LI1 and DYNC1I2; this interaction might be involved in intracellular microtubule-dependent transport of incoming viral capsid. Interacts with the shutoff protein; this interaction allows folding and formation of hexons trimers. Interacts with host NUP214 (via N-terminus); this interaction might be essential for the release of the virus genome to the nucleus.

The protein localises to the virion. Its subcellular location is the host nucleus. Functionally, major capsid protein that self-associates to form 240 hexon trimers, each in the shape of a hexagon, building most of the pseudo T=25 capsid. Assembled into trimeric units with the help of the chaperone shutoff protein. Transported by pre-protein VI to the nucleus where it associates with other structural proteins to form an empty capsid. Might be involved, through its interaction with host dyneins, in the intracellular microtubule-dependent transport of incoming viral capsid to the nucleus. This Homo sapiens (Human) protein is Hexon protein.